Consider the following 129-residue polypeptide: UPF0325 protein ESA_03178 (129 aa).

It belongs to the UPF0325 family.

The protein is UPF0325 protein ESA_03178 of Cronobacter sakazakii (strain ATCC BAA-894) (Enterobacter sakazakii).